A 756-amino-acid chain; its full sequence is Putative DNA ligase 052L (756 aa).

The active-site N6-AMP-lysine intermediate is Lys-103. Low complexity predominate over residues Pro-610–Arg-620. Residues Pro-610–Asp-630 are disordered. One can recognise a BRCT domain in the interval Lys-648–Arg-742.

Belongs to the NAD-dependent DNA ligase family.

The enzyme catalyses NAD(+) + (deoxyribonucleotide)n-3'-hydroxyl + 5'-phospho-(deoxyribonucleotide)m = (deoxyribonucleotide)n+m + AMP + beta-nicotinamide D-nucleotide.. Catalyzes the formation of phosphodiester linkages between 5'-phosphoryl and 3'-hydroxyl groups in double-stranded DNA using NAD as a coenzyme and as the energy source for the reaction. The protein is Putative DNA ligase 052L of Invertebrate iridescent virus 3 (IIV-3).